The primary structure comprises 85 residues: Beta-insect depressant toxin Lqh-dprIT3a (85 aa).

Positions 1-21 are cleaved as a signal peptide; that stretch reads MKLLLLLTISASMLIEGLVNA. In terms of domain architecture, LCN-type CS-alpha/beta spans 22–82; the sequence is DGYIRGGDGC…EWDYETNTCG (61 aa). 4 cysteine pairs are disulfide-bonded: cysteine 31/cysteine 81, cysteine 35/cysteine 56, cysteine 42/cysteine 63, and cysteine 46/cysteine 65. A Glycine amide modification is found at glycine 82.

This sequence belongs to the long (4 C-C) scorpion toxin superfamily. Sodium channel inhibitor family. Beta subfamily. In terms of tissue distribution, expressed by the venom gland.

Its subcellular location is the secreted. Its function is as follows. Depressant insect beta-toxins cause a transient contraction paralysis followed by a slow flaccid paralysis. They bind voltage-independently at site-4 of sodium channels (Nav) and block action potentials, primarily by depolarizing the axonal membrane and suppressing the sodium current. This depressant toxin is active only on insects. It is found in a relatively small amount in the venom, and its activity on insects is 10-fold higher compared to other known depressant toxins. In Leiurus hebraeus (Hebrew deathstalker scorpion), this protein is Beta-insect depressant toxin Lqh-dprIT3a.